We begin with the raw amino-acid sequence, 616 residues long: Glycogenin-1 (616 aa).

UDP contacts are provided by L10, Y16, and R95. Positions 10, 16, 95, 104, 120, 122, 158, 159, 185, 188, and 189 each coordinate UDP-alpha-D-glucose. UDP-binding residues include D120 and D122. The Mn(2+) site is built by D120 and D122. A glycan (O-linked (Glc...) tyrosine) is linked at Y230. H247, G250, and K253 together coordinate UDP. Mn(2+) is bound at residue H247. G250 and K253 together coordinate UDP-alpha-D-glucose. Residues 283-302 (HQLNNEVSKPKISDSDKTET) are compositionally biased toward basic and acidic residues. 3 disordered regions span residues 283–320 (HQLN…PTTN), 335–354 (NQNA…NPVP), and 371–516 (TNQP…SVDD). Over residues 377–386 (ESREYSKEND) the composition is skewed to basic and acidic residues. Over residues 400–419 (SPPNSTQEPNSSYSVVSTQA) the composition is skewed to polar residues. The segment covering 450–461 (STAASSNNNVSN) has biased composition (low complexity). Composition is skewed to polar residues over residues 462–485 (QPDN…PSNP) and 492–503 (DNIQKPSVSTND). Y598 carries an O-linked (Glc...) tyrosine glycan.

The protein belongs to the glycosyltransferase 8 family. Glycogenin subfamily. It depends on Mn(2+) as a cofactor.

Its subcellular location is the cytoplasm. It localises to the vacuole. It carries out the reaction L-tyrosyl-[glycogenin] + UDP-alpha-D-glucose = alpha-D-glucosyl-L-tyrosyl-[glycogenin] + UDP + H(+). The enzyme catalyses [1,4-alpha-D-glucosyl](n)-L-tyrosyl-[glycogenin] + UDP-alpha-D-glucose = [1,4-alpha-D-glucosyl](n+1)-L-tyrosyl-[glycogenin] + UDP + H(+). Self-glucosylating initiator of glycogen synthesis. It catalyzes the formation of a short alpha (1,4)-glucosyl chain covalently attached via a glucose 1-O-tyrosyl linkage to internal tyrosine residues and these chains act as primers for the elongation reaction catalyzed by glycogen synthase. Capable of transferring glucosyl residues to unbound acceptors such as free oligoglucans or oligoglucan derivatives. The sequence is that of Glycogenin-1 (GLG1) from Saccharomyces cerevisiae (strain YJM789) (Baker's yeast).